The sequence spans 294 residues: Glycine--tRNA ligase alpha subunit (294 aa).

It belongs to the class-II aminoacyl-tRNA synthetase family. In terms of assembly, tetramer of two alpha and two beta subunits.

Its subcellular location is the cytoplasm. It catalyses the reaction tRNA(Gly) + glycine + ATP = glycyl-tRNA(Gly) + AMP + diphosphate. In Polynucleobacter asymbioticus (strain DSM 18221 / CIP 109841 / QLW-P1DMWA-1) (Polynucleobacter necessarius subsp. asymbioticus), this protein is Glycine--tRNA ligase alpha subunit.